The sequence spans 412 residues: Pentatricopeptide repeat-containing protein At3g60980, mitochondrial (412 aa).

Residues 1-18 constitute a mitochondrion transit peptide; the sequence is MSLIGRLNLGRRFCTAVP. 9 PPR repeats span residues 69–104, 105–139, 143–178, 179–213, 230–264, 266–296, 305–339, 344–371, and 373–407; these read TTTICQSIIGGMLRDKRLKDAYDLYEFFFNQHNLRP, NSHCWNYIIESGFQQGLVNDALHFHHRCINSGQVH, SDDSFRILTKGLVHSGRLDQAEAFLRGRTVNRTTYP, DHVAYNNLIRGFLDLGNFKKANLVLGEFKRLFLIA, VAFLMATFMEYWFKQGKQVEAMECYNRCVLSNRLL, CAETGNALLKVLLKYGEKKNAWALYHELLDK, DSDTIKIMVDECFDMGWFSEAMETYKKARPKNDYL, IITRFCENRMLSEAESVFVDSLADDFGY, and DVNTYKTMIDAYVKAGRIHDAIKTSNKMIDATLKE.

Belongs to the PPR family. P subfamily.

It localises to the mitochondrion. This is Pentatricopeptide repeat-containing protein At3g60980, mitochondrial from Arabidopsis thaliana (Mouse-ear cress).